The chain runs to 313 residues: uncharacterized protein (313 aa).

Positions 2–57 (KLERLLAMVVLLISKKQVQAAELAELFEVSVRTIYRDIETINRAGIPIVTSQGSGG) constitute an HTH deoR-type domain. The H-T-H motif DNA-binding region spans 19–38 (VQAAELAELFEVSVRTIYRD). The region spanning 131–210 (HTEDQKTLRE…KDLAILHQTF (80 aa)) is the WYL domain.

Its subcellular location is the cytoplasm. This is an uncharacterized protein from Bacillus subtilis (strain 168).